The primary structure comprises 660 residues: Pro-secreted protein ORF2 (660 aa).

An N-terminal signal peptide occupies residues 1–19; the sequence is MRPRPILLLLLMFLPMLPA. 2 disordered regions span residues 18–43 and 66–127; these read PAPP…GFWG and VTAA…DVDS. The short motif at 28–33 is the Nuclear localization signal element; the sequence is RRRGRR. Positions 103-116 are enriched in low complexity; sequence TTAGAAPLTAVAPA. Asn137 and Asn310 each carry an N-linked (GlcNAc...) asparagine; by host glycan. The segment at 368 to 394 is particle formation; the sequence is IALTLFNLADTLLGGLPTELISSAGGQ. N-linked (GlcNAc...) asparagine; by host glycosylation occurs at Asn562. Residues 585-610 form an oligomerization region; that stretch reads TTSLGAGPVSISAVAVLAPHSALALL.

Belongs to the hepevirus capsid protein family. Homodimer. As to quaternary structure, self-assembles to form the capsid. The capsid is dominated by dimers that define the 30 morphological units. Interacts with phosphorylated protein ORF3. Interacts with host TMEM134. Interacts with host ASGR1 and ASGR2; these interactions facilitate infection of host hepatocytes. Cleaved by host protease in the N-terminus. Post-translationally, N-glycosylated. In terms of processing, not N-glycosylated. The C-terminus of the capsid protein ORF2 is truncated in non-enveloped virions shedded in feces, probably due to host proteases.

The protein resides in the secreted. It is found in the virion. It localises to the host cytoplasm. Its subcellular location is the host endoplasmic reticulum. The protein localises to the host Golgi apparatus. The protein resides in the host cell surface. It is found in the host nucleus. In terms of biological role, plays a role in the inhibition of host antibody-mediated neutralization without blocking viral cell entry. Its function is as follows. Forms an icosahedral capsid with a T=1 symmetry and a 34 nm diameter. The capsid is composed of 60 copies linked to each other. Binds to the 5' end of the genomic RNA to mediate genome encapsidation. Binds to heparin surface proteoglycans (HSPGs) to mediate viral entry. Additionally, the interactions with host ASGR1 and ASGR2 facilitate viral infection of hepatocytes. Inhibits IFN production by blocking host TBK1-induced IRF3 phosphorylation. The nuclear form probably modulates host gene expression. The sequence is that of Pro-secreted protein ORF2 from Hepatitis E virus genotype 1 (isolate Human/Burma) (HEV-1).